A 139-amino-acid polypeptide reads, in one-letter code: Protein shisa-5 (139 aa).

A helical transmembrane segment spans residues 3-23 (FGTLVAIGVIVFAVVVITIIL).

The protein belongs to the shisa family.

Its subcellular location is the endoplasmic reticulum membrane. It is found in the nucleus membrane. Functionally, can induce apoptosis in a caspase-dependent manner and plays a role in p53/TP53-dependent apoptosis. The sequence is that of Protein shisa-5 (Shisa5) from Gallus gallus (Chicken).